The sequence spans 609 residues: 2',5'-phosphodiesterase 12 (609 aa).

A mitochondrion-targeting transit peptide spans 1–16; the sequence is MWRLPGVRAALRGVRT. A disordered region spans residues 203-231; sequence PRAAEPEGGGPSSSSPSSPSPGWTETGVD. Positions 214 to 224 are enriched in low complexity; sequence SSSSPSSPSPG. Serine 217 is modified (phosphoserine). Residues glutamate 351, aspartate 496, and asparagine 498 each coordinate Mg(2+). Aspartate 496 serves as the catalytic Proton donor/acceptor.

This sequence belongs to the CCR4/nocturin family. Mg(2+) serves as cofactor. As to expression, liver.

It is found in the mitochondrion matrix. The enzyme catalyses Exonucleolytic cleavage of poly(A) to 5'-AMP.. Enzyme that cleaves 2',5'-phosphodiester bond linking adenosines of the 5'-triphosphorylated oligoadenylates, triphosphorylated oligoadenylates referred as 2-5A modulates the 2-5A system. Degrades triphosphorylated 2-5A to produce AMP and ATP. Also cleaves 3',5'-phosphodiester bond of oligoadenylates. Plays a role as a negative regulator of the 2-5A system that is one of the major pathways for antiviral and antitumor functions induced by interferons (IFNs). Suppression of this enzyme increases cellular 2-5A levels and decreases viral replication in cultured small-airway epithelial cells. The protein is 2',5'-phosphodiesterase 12 (PDE12) of Bos taurus (Bovine).